Reading from the N-terminus, the 235-residue chain is Calcium-activated potassium channel subunit beta-2 (235 aa).

Residues 1–45 are ball and chain; that stretch reads MFIWTSGRTSSSYRHDEKRNIYQKIRDHDLLDKRKTVTALKAGED. Residues 1–46 are Cytoplasmic-facing; that stretch reads MFIWTSGRTSSSYRHDEKRNIYQKIRDHDLLDKRKTVTALKAGEDR. A helical membrane pass occupies residues 47–67; it reads AILLGLAMMVCSIMMYFLLGI. The Extracellular portion of the chain corresponds to 68–194; that stretch reads TLLRSYMQSV…VILTKLYSSN (127 aa). N-linked (GlcNAc...) asparagine glycans are attached at residues N88, N96, and N119. A helical transmembrane segment spans residues 195–215; sequence VLFHSLFWPTCMMAGGVAIVA. Residues 216–235 are Cytoplasmic-facing; that stretch reads MVKLTQYLSLLCERIQRINR.

This sequence belongs to the KCNMB (TC 8.A.14.1) family. KCNMB2 subfamily. In terms of assembly, interacts with KCNMA1 tetramer. There are probably 4 molecules of KCMNB2 per KCNMA1 tetramer. Post-translationally, N-glycosylated. As to expression, highly expressed in brain and heart. Also expressed in lung.

The protein resides in the membrane. In terms of biological role, regulatory subunit of the calcium activated potassium KCNMA1 (maxiK) channel. Modulates the calcium sensitivity and gating kinetics of KCNMA1, thereby contributing to KCNMA1 channel diversity. Acts as a negative regulator that confers rapid and complete inactivation of KCNMA1 channel complex. This Rattus norvegicus (Rat) protein is Calcium-activated potassium channel subunit beta-2 (Kcnmb2).